Consider the following 100-residue polypeptide: Small ribosomal subunit protein uS14 (100 aa).

Belongs to the universal ribosomal protein uS14 family. As to quaternary structure, part of the 30S ribosomal subunit. Contacts proteins S3 and S10.

In terms of biological role, binds 16S rRNA, required for the assembly of 30S particles and may also be responsible for determining the conformation of the 16S rRNA at the A site. The sequence is that of Small ribosomal subunit protein uS14 from Prochlorococcus marinus (strain MIT 9301).